The following is a 189-amino-acid chain: Small ribosomal subunit protein uS5 (189 aa).

The region spanning 20-83 (FVDRLVHINR…ESAKRALIRV (64 aa)) is the S5 DRBM domain.

The protein belongs to the universal ribosomal protein uS5 family. As to quaternary structure, part of the 30S ribosomal subunit. Contacts proteins S4 and S8.

Its function is as follows. With S4 and S12 plays an important role in translational accuracy. In terms of biological role, located at the back of the 30S subunit body where it stabilizes the conformation of the head with respect to the body. In Beijerinckia indica subsp. indica (strain ATCC 9039 / DSM 1715 / NCIMB 8712), this protein is Small ribosomal subunit protein uS5.